Consider the following 238-residue polypeptide: Ribonuclease PH (238 aa).

Phosphate contacts are provided by residues arginine 86 and 124–126; that span reads GTR.

Belongs to the RNase PH family. As to quaternary structure, homohexameric ring arranged as a trimer of dimers.

It carries out the reaction tRNA(n+1) + phosphate = tRNA(n) + a ribonucleoside 5'-diphosphate. Its function is as follows. Phosphorolytic 3'-5' exoribonuclease that plays an important role in tRNA 3'-end maturation. Removes nucleotide residues following the 3'-CCA terminus of tRNAs; can also add nucleotides to the ends of RNA molecules by using nucleoside diphosphates as substrates, but this may not be physiologically important. Probably plays a role in initiation of 16S rRNA degradation (leading to ribosome degradation) during starvation. In Acinetobacter baylyi (strain ATCC 33305 / BD413 / ADP1), this protein is Ribonuclease PH.